The sequence spans 215 residues: Pyridoxine/pyridoxamine 5'-phosphate oxidase (215 aa).

Substrate is bound by residues 9 to 12 (RRDY) and Lys-69. Residues 64 to 69 (RVLLLK), 79 to 80 (FS), Lys-86, and Gln-108 contribute to the FMN site. Tyr-126, Arg-130, and Ser-134 together coordinate substrate. Residues 143-144 (QS) and Trp-188 each bind FMN. Substrate is bound at residue 194 to 196 (RLH). An FMN-binding site is contributed by Arg-198.

This sequence belongs to the pyridoxamine 5'-phosphate oxidase family. In terms of assembly, homodimer. Requires FMN as cofactor.

The catalysed reaction is pyridoxamine 5'-phosphate + O2 + H2O = pyridoxal 5'-phosphate + H2O2 + NH4(+). It catalyses the reaction pyridoxine 5'-phosphate + O2 = pyridoxal 5'-phosphate + H2O2. Its pathway is cofactor metabolism; pyridoxal 5'-phosphate salvage; pyridoxal 5'-phosphate from pyridoxamine 5'-phosphate: step 1/1. The protein operates within cofactor metabolism; pyridoxal 5'-phosphate salvage; pyridoxal 5'-phosphate from pyridoxine 5'-phosphate: step 1/1. Its function is as follows. Catalyzes the oxidation of either pyridoxine 5'-phosphate (PNP) or pyridoxamine 5'-phosphate (PMP) into pyridoxal 5'-phosphate (PLP). This Ectopseudomonas mendocina (strain ymp) (Pseudomonas mendocina) protein is Pyridoxine/pyridoxamine 5'-phosphate oxidase.